The sequence spans 520 residues: Laccase-2 (520 aa).

The first 19 residues, 1–19 (MRFSNAFVLVAACISSVLA), serve as a signal peptide directing secretion. Plastocyanin-like domains follow at residues 21–145 (TKTF…FVVY), 157–305 (VDDE…LTLA), and 375–488 (TVPV…FAEA). His-82 and His-84 together coordinate Cu cation. 2 disulfide bridges follow: Cys-103/Cys-509 and Cys-135/Cys-229. An N-linked (GlcNAc...) asparagine glycan is attached at Asn-108. Cu cation-binding residues include His-127 and His-129. N-linked (GlcNAc...) asparagine glycans are attached at residues Asn-241 and Asn-299. Cu cation is bound by residues His-417, His-420, His-422, His-470, Cys-471, His-472, and His-476. Asn-492 is a glycosylation site (N-linked (GlcNAc...) asparagine).

Belongs to the multicopper oxidase family. It depends on Cu cation as a cofactor.

The protein localises to the secreted. It catalyses the reaction 4 hydroquinone + O2 = 4 benzosemiquinone + 2 H2O. In terms of biological role, lignin degradation and detoxification of lignin-derived products. This chain is Laccase-2 (lcc2), found in Agaricus bisporus (White button mushroom).